Reading from the N-terminus, the 225-residue chain is NAD(P)H-quinone oxidoreductase subunit K, chloroplastic (225 aa).

Cys-43, Cys-44, Cys-108, and Cys-139 together coordinate [4Fe-4S] cluster.

It belongs to the complex I 20 kDa subunit family. In terms of assembly, NDH is composed of at least 16 different subunits, 5 of which are encoded in the nucleus. It depends on [4Fe-4S] cluster as a cofactor.

Its subcellular location is the plastid. It is found in the chloroplast thylakoid membrane. It carries out the reaction a plastoquinone + NADH + (n+1) H(+)(in) = a plastoquinol + NAD(+) + n H(+)(out). The catalysed reaction is a plastoquinone + NADPH + (n+1) H(+)(in) = a plastoquinol + NADP(+) + n H(+)(out). Functionally, NDH shuttles electrons from NAD(P)H:plastoquinone, via FMN and iron-sulfur (Fe-S) centers, to quinones in the photosynthetic chain and possibly in a chloroplast respiratory chain. The immediate electron acceptor for the enzyme in this species is believed to be plastoquinone. Couples the redox reaction to proton translocation, and thus conserves the redox energy in a proton gradient. The sequence is that of NAD(P)H-quinone oxidoreductase subunit K, chloroplastic from Illicium oligandrum (Star anise).